The sequence spans 223 residues: Urease accessory protein UreF (223 aa).

This sequence belongs to the UreF family. In terms of assembly, ureD, UreF and UreG form a complex that acts as a GTP-hydrolysis-dependent molecular chaperone, activating the urease apoprotein by helping to assemble the nickel containing metallocenter of UreC. The UreE protein probably delivers the nickel.

It localises to the cytoplasm. Required for maturation of urease via the functional incorporation of the urease nickel metallocenter. This is Urease accessory protein UreF from Rhizobium leguminosarum bv. viciae.